The chain runs to 285 residues: RNA polymerase sigma factor RpoH (285 aa).

Residues 53 to 122 form a sigma-70 factor domain-2 region; the sequence is LILSHLRFVV…IHEYVLRNWR (70 aa). The short motif at 77–80 is the Interaction with polymerase core subunit RpoC element; that stretch reads DLIQ. The sigma-70 factor domain-4 stretch occupies residues 229 to 281; sequence AMEGLDERSQDIIRARWLDEDNKSTLQELADRYGVSAERVRQLEKNAMKKLRA. Residues 254 to 273 constitute a DNA-binding region (H-T-H motif); it reads LQELADRYGVSAERVRQLEK.

It belongs to the sigma-70 factor family. RpoH subfamily. Interacts with the RNA polymerase core enzyme.

The protein resides in the cytoplasm. In terms of biological role, sigma factors are initiation factors that promote the attachment of RNA polymerase to specific initiation sites and are then released. This sigma factor is involved in regulation of expression of heat shock genes. This Enterobacter cloacae protein is RNA polymerase sigma factor RpoH.